A 524-amino-acid chain; its full sequence is Alkaline phosphatase, tissue-nonspecific isozyme (524 aa).

The first 17 residues, 1 to 17, serve as a signal peptide directing secretion; it reads MILPFLVLAIGTCLTNS. A Mg(2+)-binding site is contributed by D60. Zn(2+) is bound by residues D60 and S110. Catalysis depends on S110, which acts as the Phosphoserine intermediate. S110 carries the phosphoserine modification. C139 and C201 are joined by a disulfide. N140 is a glycosylation site (N-linked (GlcNAc...) asparagine). A Mg(2+)-binding site is contributed by T173. An N-linked (GlcNAc...) asparagine glycan is attached at N230. Residue E235 coordinates Ca(2+). An N-linked (GlcNAc...) asparagine glycan is attached at N271. Ca(2+) contacts are provided by F290 and E291. An N-linked (GlcNAc...) asparagine glycan is attached at N303. D306 provides a ligand contact to Ca(2+). Mg(2+) is bound at residue E332. Zn(2+)-binding residues include D337, H341, D378, and H379. N-linked (GlcNAc...) asparagine glycosylation occurs at N430. Position 454 (H454) interacts with Zn(2+). The cysteines at positions 489 and 497 are disulfide-linked. S501 carries GPI-anchor amidated serine lipidation. Residues 502–524 constitute a propeptide, removed in mature form; the sequence is SASSPSPGALLLPLALFPLRTLF.

This sequence belongs to the alkaline phosphatase family. As to quaternary structure, homodimer. It depends on Mg(2+) as a cofactor. Zn(2+) is required as a cofactor. The cofactor is Ca(2+). In terms of processing, N-glycosylated.

The protein resides in the cell membrane. Its subcellular location is the extracellular vesicle membrane. It localises to the mitochondrion membrane. The protein localises to the mitochondrion intermembrane space. The enzyme catalyses a phosphate monoester + H2O = an alcohol + phosphate. It catalyses the reaction diphosphate + H2O = 2 phosphate + H(+). It carries out the reaction pyridoxal 5'-phosphate + H2O = pyridoxal + phosphate. The catalysed reaction is phosphoethanolamine + H2O = ethanolamine + phosphate. The enzyme catalyses N-phosphocreatine + H2O = creatine + phosphate. It catalyses the reaction ATP + H2O = ADP + phosphate + H(+). It carries out the reaction ADP + H2O = AMP + phosphate + H(+). The catalysed reaction is AMP + H2O = adenosine + phosphate. With respect to regulation, phosphatase activity is specifically inhibited by 5-((5-chloro-2-methoxyphenyl)sulfonamido)nicotinamide (SBI-425). Functionally, alkaline phosphatase that metabolizes various phosphate compounds and plays a key role in skeletal mineralization and adaptive thermogenesis. Has broad substrate specificity and can hydrolyze a considerable variety of compounds: however, only a few substrates, such as diphosphate (inorganic pyrophosphate; PPi), pyridoxal 5'-phosphate (PLP) and N-phosphocreatine are natural substrates. Plays an essential role in skeletal and dental mineralization via its ability to hydrolyze extracellular diphosphate, a potent mineralization inhibitor, to phosphate: it thereby promotes hydroxyapatite crystal formation and increases inorganic phosphate concentration. Acts in a non-redundant manner with PHOSPHO1 in skeletal mineralization: while PHOSPHO1 mediates the initiation of hydroxyapatite crystallization in the matrix vesicles (MVs), ALPL/TNAP catalyzes the spread of hydroxyapatite crystallization in the extracellular matrix. Also promotes dephosphorylation of osteopontin (SSP1), an inhibitor of hydroxyapatite crystallization in its phosphorylated state; it is however unclear whether ALPL/TNAP mediates SSP1 dephosphorylation via a direct or indirect manner. Catalyzes dephosphorylation of PLP to pyridoxal (PL), the transportable form of vitamin B6, in order to provide a sufficient amount of PLP in the brain, an essential cofactor for enzymes catalyzing the synthesis of diverse neurotransmitters. Additionally, also able to mediate ATP degradation in a stepwise manner to adenosine, thereby regulating the availability of ligands for purinergic receptors. Also capable of dephosphorylating microbial products, such as lipopolysaccharides (LPS) as well as other phosphorylated small-molecules, such as poly-inosine:cytosine (poly I:C). Acts as a key regulator of adaptive thermogenesis as part of the futile creatine cycle: localizes to the mitochondria of thermogenic fat cells and acts by mediating hydrolysis of N-phosphocreatine to initiate a futile cycle of creatine dephosphorylation and phosphorylation. During the futile creatine cycle, creatine and N-phosphocreatine are in a futile cycle, which dissipates the high energy charge of N-phosphocreatine as heat without performing any mechanical or chemical work. In Rattus norvegicus (Rat), this protein is Alkaline phosphatase, tissue-nonspecific isozyme (Alpl).